We begin with the raw amino-acid sequence, 339 residues long: Outer membrane protein assembly factor BamC (339 aa).

Positions 1 to 19 (MKFSRQLVLGSLAVLVLSA) are cleaved as a signal peptide. Cys-20 is lipidated: N-palmitoyl cysteine. The S-diacylglycerol cysteine moiety is linked to residue Cys-20.

The protein belongs to the BamC family. As to quaternary structure, part of the Bam complex.

Its subcellular location is the cell outer membrane. Part of the outer membrane protein assembly complex, which is involved in assembly and insertion of beta-barrel proteins into the outer membrane. In Vibrio cholerae serotype O1 (strain ATCC 39315 / El Tor Inaba N16961), this protein is Outer membrane protein assembly factor BamC.